We begin with the raw amino-acid sequence, 243 residues long: uncharacterized protein (243 aa).

Belongs to the mycobacterial PPE family.

It localises to the cell membrane. This is an uncharacterized protein from Mycobacterium tuberculosis (strain CDC 1551 / Oshkosh).